Here is a 129-residue protein sequence, read N- to C-terminus: MGKETTRIRRRERKNIASGIAHVNSSFNNTTITITDAQGNAIAWSSAGTMGFKGSRKSTPYAAQVAAEDVAKKAQEHGMRTLEVEVAGPGSGRESALRALQAAGFTVTSIRDVTTIPHNGCRPRKRRRV.

The protein belongs to the universal ribosomal protein uS11 family. In terms of assembly, part of the 30S ribosomal subunit. Interacts with proteins S7 and S18. Binds to IF-3.

Its function is as follows. Located on the platform of the 30S subunit, it bridges several disparate RNA helices of the 16S rRNA. Forms part of the Shine-Dalgarno cleft in the 70S ribosome. The protein is Small ribosomal subunit protein uS11 of Rhodopseudomonas palustris (strain BisB5).